We begin with the raw amino-acid sequence, 452 residues long: tRNA modification GTPase MnmE (452 aa).

Residues Arg21, Glu82, and Arg121 each coordinate (6S)-5-formyl-5,6,7,8-tetrahydrofolate. A TrmE-type G domain is found at 214–372 (GARVVLVGRP…LAKTIATTLL (159 aa)). A K(+)-binding site is contributed by Asn224. GTP contacts are provided by residues 224 to 229 (NVGKSS), 243 to 249 (TPIPGTT), 268 to 271 (DTAG), and 353 to 355 (SAR). Ser228 is a Mg(2+) binding site. The K(+) site is built by Thr243, Ile245, and Thr248. Thr249 is a Mg(2+) binding site. Lys452 lines the (6S)-5-formyl-5,6,7,8-tetrahydrofolate pocket.

The protein belongs to the TRAFAC class TrmE-Era-EngA-EngB-Septin-like GTPase superfamily. TrmE GTPase family. Homodimer. Heterotetramer of two MnmE and two MnmG subunits. Requires K(+) as cofactor.

The protein localises to the cytoplasm. Functionally, exhibits a very high intrinsic GTPase hydrolysis rate. Involved in the addition of a carboxymethylaminomethyl (cmnm) group at the wobble position (U34) of certain tRNAs, forming tRNA-cmnm(5)s(2)U34. This is tRNA modification GTPase MnmE from Chloroflexus aurantiacus (strain ATCC 29366 / DSM 635 / J-10-fl).